Consider the following 209-residue polypeptide: Ion-translocating oxidoreductase complex subunit G (209 aa).

The chain crosses the membrane as a helical span at residues 9–29 (GLILAVFACVSTGLVALTYAL). Residue T175 is modified to FMN phosphoryl threonine.

The protein belongs to the RnfG family. The complex is composed of six subunits: RnfA, RnfB, RnfC, RnfD, RnfE and RnfG. FMN is required as a cofactor.

It localises to the cell inner membrane. Its function is as follows. Part of a membrane-bound complex that couples electron transfer with translocation of ions across the membrane. This Vibrio cholerae serotype O1 (strain ATCC 39315 / El Tor Inaba N16961) protein is Ion-translocating oxidoreductase complex subunit G.